A 649-amino-acid chain; its full sequence is ATP-dependent DNA helicase Q1 (649 aa).

The 176-residue stretch at 100–275 (INVTMAGKEV…QKILCIEKCF (176 aa)) folds into the Helicase ATP-binding domain. 113-120 (MPTGGGKG) contributes to the ATP binding site. A DEVH box motif is present at residues 219–222 (DEVH). Positions 300–451 (FIEDIVKLIN…EMVSYCQNIS (152 aa)) constitute a Helicase C-terminal domain. Zn(2+) is bound by residues cysteine 453, cysteine 471, cysteine 475, and cysteine 478. 2 positions are modified to N6-acetyllysine: lysine 514 and lysine 522. A phosphoserine mark is found at serine 597 and serine 602. Positions 597-608 (SFRVESSQTCHS) are enriched in polar residues. Residues 597-649 (SFRVESSQTCHSEQGDKKMEEKNSGNFQKKAANMLQQSGSKNTGAKKRKIDDA) form a disordered region. Over residues 609-619 (EQGDKKMEEKN) the composition is skewed to basic and acidic residues. The span at 630–639 (MLQQSGSKNT) shows a compositional bias: polar residues. Serine 634 carries the phosphoserine modification. The segment covering 640-649 (GAKKRKIDDA) has biased composition (basic residues).

It belongs to the helicase family. RecQ subfamily. In terms of assembly, may form homodimers or higher order oligomers. Interacts with EXO1. Interacts with MLH1. Interacts with PARP1. Mg(2+) serves as cofactor. Requires Mn(2+) as cofactor. It depends on Zn(2+) as a cofactor.

The protein resides in the nucleus. The enzyme catalyses Couples ATP hydrolysis with the unwinding of duplex DNA by translocating in the 3'-5' direction.. It carries out the reaction ATP + H2O = ADP + phosphate + H(+). The catalysed reaction is dATP + H2O = dADP + phosphate + H(+). DNA helicase that plays a role in DNA damage repair and genome stability. Exhibits a magnesium- and ATP-dependent DNA-helicase activity that unwinds single- and double-stranded DNA in a 3'-5' direction. Plays a role in restoring regressed replication forks. Required to restart stalled replication forks induced by abortive topoisomerase 1 and 2 lesions. May play a role in the repair of DNA that is damaged by ultraviolet light or other mutagens. This Pongo abelii (Sumatran orangutan) protein is ATP-dependent DNA helicase Q1 (RECQL).